Here is a 700-residue protein sequence, read N- to C-terminus: Elongation factor G 1 (700 aa).

Positions 8-290 (ERYRNIGISA…AVIDYLPSPA (283 aa)) constitute a tr-type G domain. GTP-binding positions include 17–24 (AHIDAGKT), 88–92 (DTPGH), and 142–145 (NKMD).

It belongs to the TRAFAC class translation factor GTPase superfamily. Classic translation factor GTPase family. EF-G/EF-2 subfamily.

It is found in the cytoplasm. Functionally, catalyzes the GTP-dependent ribosomal translocation step during translation elongation. During this step, the ribosome changes from the pre-translocational (PRE) to the post-translocational (POST) state as the newly formed A-site-bound peptidyl-tRNA and P-site-bound deacylated tRNA move to the P and E sites, respectively. Catalyzes the coordinated movement of the two tRNA molecules, the mRNA and conformational changes in the ribosome. The sequence is that of Elongation factor G 1 from Bordetella parapertussis (strain 12822 / ATCC BAA-587 / NCTC 13253).